The chain runs to 496 residues: Steroid 21-hydroxylase (496 aa).

Ser-109 contributes to the heme b binding site. Residue Arg-232 coordinates 17alpha-hydroxyprogesterone. Arg-232 serves as a coordination point for progesterone. Residues His-364, Arg-425, and Cys-427 each contribute to the heme b site.

Belongs to the cytochrome P450 family. Heme b is required as a cofactor.

The protein localises to the endoplasmic reticulum membrane. The protein resides in the microsome membrane. It catalyses the reaction progesterone + reduced [NADPH--hemoprotein reductase] + O2 = 21-hydroxyprogesterone + oxidized [NADPH--hemoprotein reductase] + H2O + H(+). The enzyme catalyses 17alpha-hydroxyprogesterone + reduced [NADPH--hemoprotein reductase] + O2 = 11-deoxycortisol + oxidized [NADPH--hemoprotein reductase] + H2O + H(+). Functionally, a cytochrome P450 monooxygenase that plays a major role in adrenal steroidogenesis. Catalyzes the hydroxylation at C-21 of progesterone and 17alpha-hydroxyprogesterone to respectively form 11-deoxycorticosterone and 11-deoxycortisol, intermediate metabolites in the biosynthetic pathway of mineralocorticoids and glucocorticoids. Mechanistically, uses molecular oxygen inserting one oxygen atom into a substrate, and reducing the second into a water molecule, with two electrons provided by NADPH via cytochrome P450 reductase (CPR; NADPH-ferrihemoprotein reductase). The polypeptide is Steroid 21-hydroxylase (CYP21) (Bos taurus (Bovine)).